Here is a 522-residue protein sequence, read N- to C-terminus: F-box only protein 7 (522 aa).

Disordered stretches follow at residues 1-20 (MKLRVRLQKRTQPLEVPESE) and 85-128 (PNLP…HGQV). Residues 1-88 (MKLRVRLQKR…EDEMPAPNLP (88 aa)) are ubiquitin-like. A compositionally biased stretch (polar residues) spans 87 to 114 (LPSSTDSEHSSLQNNDQPPLAATSSQAN). The tract at residues 92-129 (DSEHSSLQNNDQPPLAATSSQANIPDEQGSDSSHGQVT) is important for interaction with PINK1. Residues 129-169 (TQYDAWTDDSMEGPSHSAEAVSIQDAMSVEEASGFHPLEPM) are important for interaction with CDK6. Residues 180 to 324 (PHSLEALYQS…PLLAFTRQVL (145 aa)) form an important for dimerization and interaction with PSMF1 region. The region spanning 329–375 (VFGLVVLPLELKLRIFRLLDVHSVLALSAVCHDLLIASNDPLLWRCL) is the F-box domain. An important for interaction with CDK6 region spans residues 381-522 (RDSTIRGPDT…RSADNRLPYL (142 aa)). Omega-N-methylarginine is present on residues arginine 431 and arginine 451. The interval 459 to 522 (DPVTSLIPRP…RSADNRLPYL (64 aa)) is disordered. An RFDP motif motif is present at residues 481–484 (RFDP). The residue at position 518 (arginine 518) is an Asymmetric dimethylarginine.

Part of the SCF (SKP1-CUL1-F-box) E3 ubiquitin-protein ligase complex SCF(FBXO7) formed of CUL1, SKP1, RBX1 and FBXO7. Interacts via its C-terminal proline-rich region with DLGAP5. Interacts with BIRC2. Interacts with CDK6 and promotes its interaction with D-type cyclin. Interacts (via the N-terminal Ubl domain) with PRKN. Interacts (via N-terminal region) with PINK1. Interacts with PSMF1.

Its subcellular location is the cytoplasm. The protein localises to the nucleus. It is found in the mitochondrion. The protein resides in the cytosol. Its pathway is protein modification; protein ubiquitination. Functionally, substrate recognition component of a SCF (SKP1-CUL1-F-box protein) E3 ubiquitin-protein ligase complex which mediates the ubiquitination and subsequent proteasomal degradation of target proteins and plays a role in several biological processes such as cell cycle, cell proliferation, or maintenance of chromosome stability. Recognizes and ubiquitinates BIRC2 and the cell cycle regulator DLGAP5. Plays a role downstream of PINK1 in the clearance of damaged mitochondria via selective autophagy (mitophagy) by targeting PRKN to dysfunctional depolarized mitochondria. Promotes MFN1 ubiquitination. Mediates the ubiquitination and proteasomal degradation of UXT isoform 2, thereby impairing the NF-kappa-B signaling pathway. Inhibits NF-kappa-B pathway also by promoting the ubiquitinatioin of TRAF2. Affects the assembly state and activity of the proteasome in the cells including neurons by ubiquitinating the proteasomal subunit PSMA2 via 'Lys-63'-linked polyubiquitin chains. Promotes 'Lys-48'-linked polyubiquitination SIRT7, leading to the hydrogen peroxide-induced cell death. This Rattus norvegicus (Rat) protein is F-box only protein 7 (Fbxo7).